The sequence spans 195 residues: MAAWEWLSKPAPLVAPTLLGMVLVRQFADGLQVRAQIVETEAYTAGDPACHAYRRKTRRNQVMFGPPGHLYVYRIYGLYHCLNIVTEAEGIASAVLIRAAQLDCLPEWIPANKRLKPARVAAGPGLLCQALRIDGSHNGWRLEPVAAGQEGIWLEGSPAWEAQFPIVQTTRIGITRGVELPWRWYIKGHPAVSHY.

This sequence belongs to the DNA glycosylase MPG family.

In Synechococcus sp. (strain JA-3-3Ab) (Cyanobacteria bacterium Yellowstone A-Prime), this protein is Putative 3-methyladenine DNA glycosylase.